The primary structure comprises 360 residues: Putative FBD-associated F-box protein At5g56430 (360 aa).

Residues Met-1–Ala-53 form the F-box domain. Kelch repeat units lie at residues Ile-140–Asp-186 and Val-235–Glu-285. Residues Lys-276–Phe-326 form the FBD domain.

This is Putative FBD-associated F-box protein At5g56430 from Arabidopsis thaliana (Mouse-ear cress).